The primary structure comprises 84 residues: Envelope small membrane protein (84 aa).

Over 1–18 (MFMADAYLADTVWYVGQI) the chain is Virion surface. A helical membrane pass occupies residues 19 to 39 (IFIVAICLLVIIVVVAFLATF). Over 40 to 80 (KLCIQLCGMCNTLVLSPSIYVFNRGRQFYEFYNDVKPPVLD) the chain is Intravirion.

The protein belongs to the betacoronaviruses E protein family. Homopentamer. Interacts with membrane protein M in the budding compartment of the host cell, which is located between endoplasmic reticulum and the Golgi complex. Interacts with Nucleoprotein.

Its subcellular location is the host Golgi apparatus membrane. Its function is as follows. Plays a central role in virus morphogenesis and assembly. Acts as a viroporin and self-assembles in host membranes forming pentameric protein-lipid pores that allow ion transport. Also plays a role in the induction of apoptosis. The sequence is that of Envelope small membrane protein from Porcine hemagglutinating encephalomyelitis virus (strain 67N) (HEV-67N).